The following is a 260-amino-acid chain: DNA-binding protein RFXANK (260 aa).

The interval 1–79 (MELTQPAEDL…STTLTNRQRG (79 aa)) is disordered. Positions 22–33 (GDPEDPGEEAAD) are enriched in acidic residues. Over residues 57-77 (SVSSPQAGSSLKHSTTLTNRQ) the composition is skewed to polar residues. 5 ANK repeats span residues 89-118 (LDSLSIHQLAAQGELDQLKEHLRKGDNLVN), 123-152 (RGFTPLIWASAFGEIETVRFLLEWGADPHI), 156-185 (ERESALSLASTGGYTDIVGLLLERDVDINI), 189-218 (NGGTPLLYAVRGNHVKCVEALLARGADLTT), and 222-251 (SGYTPMDLAVALGYRKVQQVIENHILKLFQ).

As to quaternary structure, forms homodimers. The RFX heterotetrameric complex consists of 2 molecules of RFX5 and one each of RFXAP and RFX-B/RFXANK; with each subunit representing a separate complementation group. Interacts (via ankyrin repeats) with RFX5 (via PxLPxI/L motif); the interaction is direct. RFX forms cooperative DNA binding complexes with X2BP and CBF/NF-Y. RFX associates with CIITA to form an active transcriptional complex. Interacts with RAF1. Interacts (via ankyrin repeats) with RFX7 (via PxLPxI/L motif). Post-translationally, phosphorylated by RAF1. In terms of tissue distribution, ubiquitous.

It localises to the cytoplasm. The protein localises to the nucleus. In terms of biological role, activates transcription from class II MHC promoters. Activation requires the activity of the MHC class II transactivator/CIITA. May regulate other genes in the cell. RFX binds the X1 box of MHC-II promoters. May also potentiate the activation of RAF1. Its function is as follows. Isoform 2 is not involved in the positive regulation of MHC class II genes. The protein is DNA-binding protein RFXANK (RFXANK) of Homo sapiens (Human).